Reading from the N-terminus, the 311-residue chain is Putative dihydroorotate dehydrogenase A (fumarate) (311 aa).

Substrate contacts are provided by residues K45, 69–73, and N128; that span reads NSMGL. 45-46 contributes to the FMN binding site; that stretch reads KT. FMN is bound at residue N128. Residue C131 is the Nucleophile of the active site. Residues K165 and V193 each contribute to the FMN site. Substrate is bound at residue 194–195; that stretch reads NS. FMN is bound by residues G220, 248–249, and 270–271; these read GG and GT.

It belongs to the dihydroorotate dehydrogenase family. Type 1 subfamily. As to quaternary structure, homodimer. The cofactor is FMN.

The protein localises to the cytoplasm. The enzyme catalyses (S)-dihydroorotate + fumarate = orotate + succinate. The protein operates within pyrimidine metabolism; UMP biosynthesis via de novo pathway. Functionally, catalyzes the conversion of dihydroorotate to orotate with fumarate as the electron acceptor. This Streptococcus equi subsp. equi (strain 4047) protein is Putative dihydroorotate dehydrogenase A (fumarate) (pyrD).